The sequence spans 286 residues: MTLLDGKSLSVTIERDLTEQIAALVSQGVTPGLAVILVGNNPASCAYVQMKAKACKRVGIYSVTHEMPSKITQDELLSVIEILNNDPNIDGILVQLPLPAHIQTSKVLEAINPKKDVDGFHPFNIGRLSVNVDTFVPATPLGVMKLLESYHIDVRGKDVVIIGMSNIVGKPLMSLMLNAGASVSCCHILTRDVKQYTKNADIVCVAVGKVGLLSADMIKEGAVVVDVGINRLESGTLVGDVDFENVAPKSSFITPVPGGVGPMTIVSLLQNTYKAAMYRLEQRMRV.

NADP(+) is bound by residues 163–165, I188, and I229; that span reads GMS.

It belongs to the tetrahydrofolate dehydrogenase/cyclohydrolase family. Homodimer.

The catalysed reaction is (6R)-5,10-methylene-5,6,7,8-tetrahydrofolate + NADP(+) = (6R)-5,10-methenyltetrahydrofolate + NADPH. The enzyme catalyses (6R)-5,10-methenyltetrahydrofolate + H2O = (6R)-10-formyltetrahydrofolate + H(+). Its pathway is one-carbon metabolism; tetrahydrofolate interconversion. Functionally, catalyzes the oxidation of 5,10-methylenetetrahydrofolate to 5,10-methenyltetrahydrofolate and then the hydrolysis of 5,10-methenyltetrahydrofolate to 10-formyltetrahydrofolate. This is Bifunctional protein FolD from Helicobacter hepaticus (strain ATCC 51449 / 3B1).